The following is a 557-amino-acid chain: Urocanate hydratase (557 aa).

Residues 1-20 are disordered; sequence MSNPRHNEREVRSPRGDELN. Residues 52-53, Gln-130, 176-178, Glu-196, Arg-201, 242-243, 263-267, 273-274, and Tyr-322 each bind NAD(+); these read GG, GMG, NA, QTSAH, and YL. Cys-410 is a catalytic residue. Gly-492 serves as a coordination point for NAD(+).

The protein belongs to the urocanase family. NAD(+) is required as a cofactor.

The protein resides in the cytoplasm. The catalysed reaction is 4-imidazolone-5-propanoate = trans-urocanate + H2O. It participates in amino-acid degradation; L-histidine degradation into L-glutamate; N-formimidoyl-L-glutamate from L-histidine: step 2/3. Catalyzes the conversion of urocanate to 4-imidazolone-5-propionate. In Brucella melitensis biotype 2 (strain ATCC 23457), this protein is Urocanate hydratase.